A 2149-amino-acid polypeptide reads, in one-letter code: Polyketide synthase 1 (2149 aa).

The segment at 19–261 (FIFGDQSSCN…TRLAVHAPYH (243 aa)) is N-terminal acylcarrier protein transacylase domain (SAT). Residues 394-829 (ESKIAIIGMS…GGNTALLVED (436 aa)) form the Ketosynthase family 3 (KS3) domain. Catalysis depends on for beta-ketoacyl synthase activity residues cysteine 566, histidine 701, and histidine 745. The tract at residues 929–1233 (AFVFSGQGSQ…PSLMRNKDGW (305 aa)) is malonyl-CoA:ACP transacylase (MAT) domain. Serine 1018 functions as the For acyl/malonyl transferase activity in the catalytic mechanism. The tract at residues 1310 to 1624 (TASVHRIVHE…RKVLNTAMPP (315 aa)) is product template (PT) domain. The N-terminal hotdog fold stretch occupies residues 1314–1447 (HRIVHESVDK…SSLHFERPKV (134 aa)). Positions 1314–1619 (HRIVHESVDK…FQGIPRKVLN (306 aa)) constitute a PKS/mFAS DH domain. The Proton acceptor; for dehydratase activity role is filled by histidine 1346. The tract at residues 1474–1619 (LNSRMSSGVI…FQGIPRKVLN (146 aa)) is C-terminal hotdog fold. The active-site Proton donor; for dehydratase activity is the aspartate 1533. Residues 1619–1657 (NTAMPPPKSQNEAPVRSAPAKPAAKPPKSASSEHSGHFA) are disordered. Low complexity predominate over residues 1635–1650 (SAPAKPAAKPPKSASS). One can recognise a Carrier 1 domain in the interval 1678-1752 (RNPMLAVFKI…DLATHLGLDT (75 aa)). Serine 1712 carries the post-translational modification O-(pantetheine 4'-phosphoryl)serine. Residues 1755 to 1790 (SDQSSGQSSSSGGLSPRSDSIGEITSSATTPPSLSP) are compositionally biased toward low complexity. Residues 1755 to 1796 (SDQSSGQSSSSGGLSPRSDSIGEITSSATTPPSLSPRGSVSG) are disordered. One can recognise a Carrier 2 domain in the interval 1793 to 1870 (SVSGSQCKDV…SFKHMFQQGH (78 aa)). An O-(pantetheine 4'-phosphoryl)serine modification is found at serine 1830. The tract at residues 1882–2147 (LKQYRATSTL…ERVAAFIRST (266 aa)) is thioesterase (TE) domain. Serine 1973 functions as the For thioesterase activity in the catalytic mechanism.

In terms of biological role, polyketide synthase; part of the Pks1 gene cluster that mediates the biosynthesis of an anthraquinone derivative pigment that contributes to conidial pigmentation that provides protection from UV radiation, heat and cold stress. The polyketide synthase Pks1 produces 1-acetyl-2,4,6,8-tetrahydroxy-9,10-anthraquinone though condensation of acetyl-CoA with malonyl-CoA. The dehydratase EthD and the laccase Mlac1 further convert the anthraquinone derivative into the final conidial pigment. The protein is Polyketide synthase 1 of Metarhizium majus (strain ARSEF 297).